The following is a 704-amino-acid chain: Urea-proton symporter DUR3 (704 aa).

15 helical membrane-spanning segments follow: residues Tyr-39–Leu-59, Val-80–Leu-100, Phe-115–Ile-135, Ile-159–Gly-179, Leu-192–Leu-212, Phe-216–Leu-236, Ser-291–Val-311, Leu-336–Leu-356, Leu-388–Ser-408, Ala-435–Val-455, Tyr-461–Trp-481, Ala-486–Thr-506, Leu-527–Val-547, Ala-590–Leu-610, and Phe-622–Gly-642.

It belongs to the sodium:solute symporter (SSF) (TC 2.A.21) family. As to expression, expressed in root rhizodermis, including root hairs and cortex in more basal root zones. Expressed in shoots.

The protein localises to the cell membrane. High-affinity urea-proton symporter involved in the active transport of urea across the plasma membrane into root cells. May play an important role in urea uptake by plant cells at low external urea concentrations. The polypeptide is Urea-proton symporter DUR3 (DUR3) (Arabidopsis thaliana (Mouse-ear cress)).